We begin with the raw amino-acid sequence, 267 residues long: tRNA pseudouridine synthase A (267 aa).

Aspartate 55 (nucleophile) is an active-site residue. Substrate is bound at residue tyrosine 111.

This sequence belongs to the tRNA pseudouridine synthase TruA family.

The catalysed reaction is uridine(38/39/40) in tRNA = pseudouridine(38/39/40) in tRNA. In terms of biological role, formation of pseudouridine at positions 38, 39 and 40 in the anticodon stem and loop of transfer RNAs. The sequence is that of tRNA pseudouridine synthase A from Thermococcus gammatolerans (strain DSM 15229 / JCM 11827 / EJ3).